Here is a 288-residue protein sequence, read N- to C-terminus: Pyridoxal kinase PdxY (288 aa).

Residues S12 and 47 to 48 (TQ) contribute to the substrate site. Residues D114, E151, K184, and 211–214 (RPLL) contribute to the ATP site. D225 serves as a coordination point for substrate.

This sequence belongs to the pyridoxine kinase family. PdxY subfamily. Homodimer. Mg(2+) is required as a cofactor.

It catalyses the reaction pyridoxal + ATP = pyridoxal 5'-phosphate + ADP + H(+). It functions in the pathway cofactor metabolism; pyridoxal 5'-phosphate salvage; pyridoxal 5'-phosphate from pyridoxal: step 1/1. Its function is as follows. Pyridoxal kinase involved in the salvage pathway of pyridoxal 5'-phosphate (PLP). Catalyzes the phosphorylation of pyridoxal to PLP. The polypeptide is Pyridoxal kinase PdxY (Pseudomonas savastanoi pv. phaseolicola (strain 1448A / Race 6) (Pseudomonas syringae pv. phaseolicola (strain 1448A / Race 6))).